The following is a 277-amino-acid chain: Bifunctional protein FolD (277 aa).

Residues 160 to 162 (GAS), serine 185, and isoleucine 226 each bind NADP(+).

Belongs to the tetrahydrofolate dehydrogenase/cyclohydrolase family. In terms of assembly, homodimer.

It catalyses the reaction (6R)-5,10-methylene-5,6,7,8-tetrahydrofolate + NADP(+) = (6R)-5,10-methenyltetrahydrofolate + NADPH. It carries out the reaction (6R)-5,10-methenyltetrahydrofolate + H2O = (6R)-10-formyltetrahydrofolate + H(+). The protein operates within one-carbon metabolism; tetrahydrofolate interconversion. In terms of biological role, catalyzes the oxidation of 5,10-methylenetetrahydrofolate to 5,10-methenyltetrahydrofolate and then the hydrolysis of 5,10-methenyltetrahydrofolate to 10-formyltetrahydrofolate. The protein is Bifunctional protein FolD of Vesicomyosocius okutanii subsp. Calyptogena okutanii (strain HA).